We begin with the raw amino-acid sequence, 708 residues long: Leukotoxin translocation ATP-binding protein LktB (708 aa).

The Peptidase C39 domain maps to 1-126; sequence MEANHQRNDL…ACYQGQLILV (126 aa). In terms of domain architecture, ABC transmembrane type-1 spans 155-437; sequence FLETLIVSIF…LAQLWQDFQQ (283 aa). The next 5 membrane-spanning stretches (helical) occupy residues 159–179, 192–212, 270–290, 296–316, and 389–409; these read LIVS…FQVV, LNII…LSGL, ALTS…MWYY, LVIL…SPIL, and VMVI…LSIG. The 236-residue stretch at 469-704 folds into the ABC transporter domain; it reads ISFKNIRFRY…SNGLYSYLHQ (236 aa). 503 to 510 contacts ATP; that stretch reads GRSGSGKS.

The protein belongs to the ABC transporter superfamily. Protein-1 exporter (TC 3.A.1.109) family. In terms of assembly, homodimer.

Its subcellular location is the cell inner membrane. It catalyses the reaction ATP + H2O + proteinSide 1 = ADP + phosphate + proteinSide 2.. In terms of biological role, part of the ABC transporter complex LktBD involved in leukotoxin export. Transmembrane domains (TMD) form a pore in the inner membrane and the ATP-binding domain (NBD) is responsible for energy generation. In Mannheimia haemolytica (Pasteurella haemolytica), this protein is Leukotoxin translocation ATP-binding protein LktB (lktB).